Here is a 599-residue protein sequence, read N- to C-terminus: Glycerophosphodiester phosphodiesterase domain-containing protein 5 (599 aa).

Residues 1–42 (MVKHQPLQYYEPQLCLSCLTGIYGCRWKRYQRSHDDTTKWER) are Cytoplasmic-facing. 2 cysteine pairs are disulfide-bonded: cysteine 15/cysteine 18 and cysteine 25/cysteine 576. The chain crosses the membrane as a helical span at residues 43-63 (LWFLILTSSFFLTLVWFYFWW). Residues 64-87 (EVHNDYNEINWFLYNRMGYWSDWS) lie on the Extracellular side of the membrane. The chain crosses the membrane as a helical span at residues 88–108 (IPILVTTAAGFTYITVLLILA). Residues 109 to 125 (LCHIAVGQQMNLHWLHK) are Cytoplasmic-facing. The chain crosses the membrane as a helical span at residues 126–146 (IGLMTTLITTVVTMSSIAQLW). Topologically, residues 147-160 (DDEWEMVFISLQAT) are extracellular. The chain crosses the membrane as a helical span at residues 161–181 (APFLHIGALAAVTALSWLIAG). The Cytoplasmic segment spans residues 182 to 192 (QFARMEKATSQ). The chain crosses the membrane as a helical span at residues 193 to 213 (MLMVTAYLAVVVALYLVPLTI). At 214–497 (SSPCIMEKKA…IWLMPPDEYR (284 aa)) the chain is on the extracellular side. The 258-residue stretch at 228 to 485 (PAIIGHRGAP…DSSHVLRKVP (258 aa)) folds into the GP-PDE domain. 5 N-linked (GlcNAc...) asparagine glycosylation sites follow: asparagine 301, asparagine 336, asparagine 352, asparagine 374, and asparagine 448. Residues 498–518 (LIWITSDLISFIIIVGVFIFQ) form a helical membrane-spanning segment. Residues 519–599 (NYHNDQWRLG…DHRDTRLRMN (81 aa)) are Cytoplasmic-facing.

It belongs to the glycerophosphoryl diester phosphodiesterase family. In terms of assembly, interacts with PRDX1; forms a mixed-disulfide with PRDX1, leading to disrupt intramolecular disulfide bond between Cys-25 and Cys-576. Intramolecular disulfide bond between Cys-25 and Cys-576 is reduced by PRDX1. Detected in mature motor neurons.

The protein localises to the endomembrane system. It is found in the cytoplasm. The protein resides in the perinuclear region. It localises to the cell projection. Its subcellular location is the growth cone. It catalyses the reaction a 1,2-diacyl-sn-glycero-3-phospho-(1D-myo-inositol-4,5-bisphosphate) + H2O = 1D-myo-inositol 1,4,5-trisphosphate + a 1,2-diacyl-sn-glycerol + H(+). The catalysed reaction is sn-glycerol 3-phosphocholine + H2O = sn-glycerol 3-phosphate + choline + H(+). With respect to regulation, activated by PRDX1 by reduction of an intramolecular disulfide bond. Functionally, glycerophosphodiester phosphodiesterase that promotes cell cycle exit and drives spinal motor neuron differentiation. Mediates the cleavage of glycosylphosphatidylinositol (GPI) anchor of target proteins: removes the GPI-anchor of RECK, leading to release RECK from the plasma membrane. May contribute to the osmotic regulation of cellular glycerophosphocholine. In Gallus gallus (Chicken), this protein is Glycerophosphodiester phosphodiesterase domain-containing protein 5 (GDPD5).